The primary structure comprises 434 residues: Tyrosine-protein phosphatase non-receptor type 1 (434 aa).

The Tyrosine-protein phosphatase domain maps to 3–277 (IEKEFHRLDQ…RFSYLAVIEG (275 aa)). Ser-50 is subject to Phosphoserine. Residues Asp-181, 215–221 (CSAGIGR), and Gln-262 contribute to the substrate site. Cys-215 acts as the Phosphocysteine intermediate in catalysis. The tract at residues 291–319 (WKELSNEDLDPPPEHTPPPPRPPKRTSEM) is disordered.

Belongs to the protein-tyrosine phosphatase family. Non-receptor class 1 subfamily. As to quaternary structure, interacts with EPHA3 (phosphorylated); dephosphorylates EPHA3 and may regulate its trafficking and function. Interacts with MET. Interacts with NCK1. Post-translationally, phosphorylated on serine and threonine residues near the N-terminus by casein kinase II (CK2).

It is found in the endoplasmic reticulum membrane. The enzyme catalyses O-phospho-L-tyrosyl-[protein] + H2O = L-tyrosyl-[protein] + phosphate. Functionally, may play an important role in CKII- and p60c-src-induced signal transduction cascades. May regulate the EFNA5-EPHA3 signaling pathway which modulates cell reorganization and cell-cell repulsion. May also regulate the hepatocyte growth factor receptor signaling pathway through dephosphorylation of MET. The protein is Tyrosine-protein phosphatase non-receptor type 1 (PTPN1) of Gallus gallus (Chicken).